The sequence spans 31 residues: Scolopendra 20566.01 Da toxin (31 aa).

This sequence belongs to the CRISP family. Venom allergen 5-like subfamily. Contains 3 disulfide bonds. In terms of tissue distribution, expressed by the venom gland.

Its subcellular location is the secreted. The sequence is that of Scolopendra 20566.01 Da toxin from Scolopendra angulata (Barbados giant red centipede).